Here is a 265-residue protein sequence, read N- to C-terminus: Transcription factor BHLH089 (265 aa).

The disordered stretch occupies residues methionine 1–aspartate 132. Composition is skewed to gly residues over residues leucine 17–glycine 29 and serine 44–alanine 53. Positions serine 95–arginine 105 are enriched in polar residues. The tract at residues glutamine 142–arginine 155 is basic motif; degenerate. Residues glutamine 142 to leucine 192 form the bHLH domain. The segment at glutamate 156–leucine 192 is helix-loop-helix motif.

This sequence belongs to the bHLH protein family. As to quaternary structure, interacts with RSS3.

It is found in the nucleus. In terms of biological role, transcription factor that may regulate jasmonate-regulated genes. The protein is Transcription factor BHLH089 of Oryza sativa subsp. japonica (Rice).